The sequence spans 517 residues: MALSELALLRRLQESRHSRKLILFIVFLALLLDNMLLTVVVPIIPSYLYSIEHEKDALEIQTAKPGLTASAPGSFQNIFSYYDNSTMVTGNSTDHLQGALVHEATTQHMATNSSSASSDCPSEDKDLLNENVQVGLLFASKATVQLLTNPFIGLLTNRIGYPIPMFTGFCIMFISTVMFAFSRTYAFLLIARSLQGIGSSCSSVAGMGMLASVYTDDEERGNAMGIALGGLAMGVLVGPPFGSVLYEFVGKTAPFLVLAALVLLDGAIQLFVLQPSRVQPESQKGTPLTTLLRDPYILIAAGSICFANMGIAMLEPALPIWMMETMCSHKWQLGVAFLPASVSYLIGTNVFGILAHKMGRWLCALLGMIIVGMSILCIPLAKNIYGLIAPNFGVGFAIGMVDSSMMPIMGYLVDLRHVSVYGSVYAIADVAFCMGYAIGPSAGGAIAKAIGFPWLMTIIGIIDILFAPLCFFLRSPPAKEEKMAILMDHNCPIKTKMYTQNSSQSHPIGEDEESESD.

Residues 1 to 20 (MALSELALLRRLQESRHSRK) are Cytoplasmic-facing. The helical transmembrane segment at 21 to 41 (LILFIVFLALLLDNMLLTVVV) threads the bilayer. The Extracellular segment spans residues 42-132 (PIIPSYLYSI…EDKDLLNENV (91 aa)). N-linked (GlcNAc...) asparagine glycans are attached at residues Asn84, Asn91, and Asn112. Cys120 and Cys327 are oxidised to a cystine. The helical transmembrane segment at 133–153 (QVGLLFASKATVQLLTNPFIG) threads the bilayer. Topologically, residues 154–162 (LLTNRIGYP) are cytoplasmic. A helical membrane pass occupies residues 163–183 (IPMFTGFCIMFISTVMFAFSR). Residues 184–192 (TYAFLLIAR) are Extracellular-facing. A helical membrane pass occupies residues 193–213 (SLQGIGSSCSSVAGMGMLASV). The Cytoplasmic segment spans residues 214-222 (YTDDEERGN). Residues 223-245 (AMGIALGGLAMGVLVGPPFGSVL) traverse the membrane as a helical segment. Residues Leu231 and Val235 each contribute to the serotonin site. Topologically, residues 246–251 (YEFVGK) are extracellular. A helical transmembrane segment spans residues 252–274 (TAPFLVLAALVLLDGAIQLFVLQ). The Cytoplasmic portion of the chain corresponds to 275–294 (PSRVQPESQKGTPLTTLLRD). The helical transmembrane segment at 295–314 (PYILIAAGSICFANMGIAML) threads the bilayer. Serotonin-binding residues include Asn308, Ile311, Glu315, Phe337, and Tyr344. Topologically, residues 315–331 (EPALPIWMMETMCSHKW) are extracellular. A helical transmembrane segment spans residues 332–355 (QLGVAFLPASVSYLIGTNVFGILA). Residues 356 to 360 (HKMGR) are Cytoplasmic-facing. The chain crosses the membrane as a helical span at residues 361-381 (WLCALLGMIIVGMSILCIPLA). Topologically, residues 382–392 (KNIYGLIAPNF) are extracellular. A helical membrane pass occupies residues 393-413 (GVGFAIGMVDSSMMPIMGYLV). Asp402 contributes to the serotonin binding site. Residues 414–417 (DLRH) lie on the Cytoplasmic side of the membrane. The helical transmembrane segment at 418 to 438 (VSVYGSVYAIADVAFCMGYAI) threads the bilayer. Tyr436 serves as a coordination point for serotonin. Residues 439-443 (GPSAG) lie on the Extracellular side of the membrane. A helical transmembrane segment spans residues 444–465 (GAIAKAIGFPWLMTIIGIIDIL). The Cytoplasmic segment spans residues 466 to 517 (FAPLCFFLRSPPAKEEKMAILMDHNCPIKTKMYTQNSSQSHPIGEDEESESD). Phosphoserine; by CK2 is present on residues Ser514 and Ser516.

The protein belongs to the major facilitator superfamily. Vesicular transporter family. Interacts with SLC6A3.

It localises to the cytoplasmic vesicle. Its subcellular location is the secretory vesicle. The protein resides in the synaptic vesicle membrane. The protein localises to the secretory vesicle membrane. It is found in the cell projection. It localises to the axon. Its subcellular location is the dendrite. It catalyses the reaction serotonin(in) + 2 H(+)(out) = serotonin(out) + 2 H(+)(in). The enzyme catalyses dopamine(in) + 2 H(+)(out) = dopamine(out) + 2 H(+)(in). The catalysed reaction is histamine(in) + 2 H(+)(out) = histamine(out) + 2 H(+)(in). Strongly inhibited by reserpine and tetrabenazine. Also inhibited to a lesser extent by ketanserin and fenfluramine. Reserpine and ketanserin inhibit by blocking the substrate-binding pocket. Tetrabenazine traps SLC18A2/VMAT2 in an occluded conformation and its inhibition is specific to SLC18A2/VMAT2 but not SLC18A1/VMAT1. Electrogenic antiporter that exchanges one cationic monoamine with two intravesicular protons across the membrane of secretory and synaptic vesicles. Uses the electrochemical proton gradient established by the V-type proton-pump ATPase to accumulate high concentrations of monoamines inside the vesicles prior to their release via exocytosis. Transports a variety of catecholamines such as dopamine, adrenaline and noradrenaline, histamine, and indolamines such as serotonin. Regulates the transvesicular monoaminergic gradient that determines the quantal size. Mediates somatodendritic dopamine release in hippocampal neurons, likely as part of a regulated secretory pathway that integrates retrograde synaptic signals. Acts as a primary transporter for striatal dopamine loading ensuring impulse-dependent release of dopamine at the synaptic cleft. Responsible for histamine and serotonin storage and subsequent corelease from mast cell granules. This Bos taurus (Bovine) protein is Synaptic vesicular amine transporter (SLC18A2).